The sequence spans 336 residues: Urokinase plasminogen activator surface receptor (336 aa).

A signal peptide spans 1 to 23 (MGHPLLLPLLLLLLHTGVPASWG). 3 consecutive UPAR/Ly6 domains span residues 24 to 111 (LRCM…VTFP), 116 to 208 (LECI…LSLA), and 215 to 302 (HRCY…EDIQ). 3 cysteine pairs are disulfide-bonded: C26/C47, C29/C35, and C40/C68. An N-linked (GlcNAc...) asparagine glycan is attached at N75. 11 cysteine pairs are disulfide-bonded: C94/C99, C118/C145, C121/C128, C138/C170, C176/C193, C194/C199, C217/C245, C220/C228, C238/C264, C270/C288, and C289/C294. N195 and N223 each carry an N-linked (GlcNAc...) asparagine glycan.

Monomer. Interacts (via the UPAR/Ly6 domains) with SRPX2. Interacts with MRC2. Interacts with FAP (seprase); the interaction occurs at the cell surface of invadopodia membrane. Interacts with SORL1 (via N-terminal ectodomain); this interaction decreases PLAUR internalization. The ternary complex composed of PLAUR-PLAU-SERPINE1 also interacts with SORL1.

The protein localises to the cell membrane. Its subcellular location is the cell projection. It is found in the invadopodium membrane. In terms of biological role, acts as a receptor for urokinase plasminogen activator. Plays a role in localizing and promoting plasmin formation. Mediates the proteolysis-independent signal transduction activation effects of U-PA. It is subject to negative-feedback regulation by U-PA which cleaves it into an inactive form. This chain is Urokinase plasminogen activator surface receptor (PLAUR), found in Aotus trivirgatus (Three-striped night monkey).